The following is a 549-amino-acid chain: Tegument protein (549 aa).

Disordered regions lie at residues 50 to 92, 353 to 391, and 523 to 542; these read KKKA…TASP, ETGDCSSLPNANTQTHRFPSPHKEMRPPPTNEADSCSSY, and TPIKTTSSSSPRPRNDTRSP. Polar residues-rich tracts occupy residues 75-84 and 356-369; these read PQALSVPSLS and DCSSLPNANTQTHR. Residues 523 to 534 are compositionally biased toward low complexity; sequence TPIKTTSSSSPR.

This viral structural protein may have important functions, such as protein kinase activity, DNA binding, and possible transcriptional activation of immediate-early genes. The protein is Tegument protein of Homo sapiens (Human).